Here is a 274-residue protein sequence, read N- to C-terminus: Thiamine kinase (274 aa).

It belongs to the thiamine kinase family.

It carries out the reaction thiamine + ATP = thiamine phosphate + ADP + H(+). The protein operates within cofactor biosynthesis; thiamine diphosphate biosynthesis; thiamine phosphate from thiamine: step 1/1. In terms of biological role, catalyzes the ATP-dependent phosphorylation of thiamine to thiamine phosphate. Is involved in thiamine salvage. In Salmonella heidelberg (strain SL476), this protein is Thiamine kinase.